The primary structure comprises 324 residues: Ferrochelatase (324 aa).

His197 and Glu278 together coordinate Fe cation.

The protein belongs to the ferrochelatase family.

The protein localises to the cytoplasm. The enzyme catalyses heme b + 2 H(+) = protoporphyrin IX + Fe(2+). It participates in porphyrin-containing compound metabolism; protoheme biosynthesis; protoheme from protoporphyrin-IX: step 1/1. Its function is as follows. Catalyzes the ferrous insertion into protoporphyrin IX. The polypeptide is Ferrochelatase (Aeromonas hydrophila subsp. hydrophila (strain ATCC 7966 / DSM 30187 / BCRC 13018 / CCUG 14551 / JCM 1027 / KCTC 2358 / NCIMB 9240 / NCTC 8049)).